Consider the following 347-residue polypeptide: Farnesyl pyrophosphate synthase (347 aa).

Isopentenyl diphosphate-binding residues include Lys50, Arg53, and Gln88. Positions 95 and 99 each coordinate Mg(2+). Arg104 is a dimethylallyl diphosphate binding site. Arg105 contributes to the isopentenyl diphosphate binding site. The dimethylallyl diphosphate site is built by Lys192, Thr193, Gln232, Lys249, and Lys258.

Belongs to the FPP/GGPP synthase family. In terms of assembly, interacts with spo9. The cofactor is Mg(2+).

It is found in the cytoplasm. The protein resides in the nucleus. The enzyme catalyses isopentenyl diphosphate + dimethylallyl diphosphate = (2E)-geranyl diphosphate + diphosphate. It catalyses the reaction isopentenyl diphosphate + (2E)-geranyl diphosphate = (2E,6E)-farnesyl diphosphate + diphosphate. Its pathway is isoprenoid biosynthesis; farnesyl diphosphate biosynthesis; farnesyl diphosphate from geranyl diphosphate and isopentenyl diphosphate: step 1/1. It participates in isoprenoid biosynthesis; geranyl diphosphate biosynthesis; geranyl diphosphate from dimethylallyl diphosphate and isopentenyl diphosphate: step 1/1. Functionally, farnesyl pyrophosphate synthase; part of the second module of ergosterol biosynthesis pathway that includes the middle steps of the pathway. Fps1 catalyzes the sequential condensation of isopentenyl pyrophosphate with dimethylallyl pyrophosphate, and then with the resultant geranylpyrophosphate to the ultimate product farnesyl pyrophosphate. The second module is carried out in the vacuole and involves the formation of farnesyl diphosphate, which is also an important intermediate in the biosynthesis of ubiquinone, dolichol, heme and prenylated proteins. Activity by the mevalonate kinase erg12 first converts mevalonate into 5-phosphomevalonate. 5-phosphomevalonate is then further converted to 5-diphosphomevalonate by the phosphomevalonate kinase erg8. The diphosphomevalonate decarboxylase mvd1 then produces isopentenyl diphosphate. The isopentenyl-diphosphate delta-isomerase idi1 then catalyzes the 1,3-allylic rearrangement of the homoallylic substrate isopentenyl (IPP) to its highly electrophilic allylic isomer, dimethylallyl diphosphate (DMAPP). Finally the farnesyl diphosphate synthase fps1 catalyzes the sequential condensation of isopentenyl pyrophosphate with dimethylallyl pyrophosphate, and then with the resultant geranylpyrophosphate to the ultimate product farnesyl pyrophosphate. This Schizosaccharomyces pombe (strain 972 / ATCC 24843) (Fission yeast) protein is Farnesyl pyrophosphate synthase.